The chain runs to 94 residues: Large ribosomal subunit protein uL23 (94 aa).

This sequence belongs to the universal ribosomal protein uL23 family. In terms of assembly, part of the 50S ribosomal subunit. Contacts protein L29, and trigger factor when it is bound to the ribosome.

In terms of biological role, one of the early assembly proteins it binds 23S rRNA. One of the proteins that surrounds the polypeptide exit tunnel on the outside of the ribosome. Forms the main docking site for trigger factor binding to the ribosome. The chain is Large ribosomal subunit protein uL23 from Geobacter sp. (strain M21).